Here is a 182-residue protein sequence, read N- to C-terminus: ATP synthase subunit delta (182 aa).

The protein belongs to the ATPase delta chain family. In terms of assembly, F-type ATPases have 2 components, F(1) - the catalytic core - and F(0) - the membrane proton channel. F(1) has five subunits: alpha(3), beta(3), gamma(1), delta(1), epsilon(1). CF(0) has four main subunits: a(1), b(1), b'(1) and c(10-14). The alpha and beta chains form an alternating ring which encloses part of the gamma chain. F(1) is attached to F(0) by a central stalk formed by the gamma and epsilon chains, while a peripheral stalk is formed by the delta, b and b' chains.

It localises to the cellular thylakoid membrane. F(1)F(0) ATP synthase produces ATP from ADP in the presence of a proton or sodium gradient. F-type ATPases consist of two structural domains, F(1) containing the extramembraneous catalytic core and F(0) containing the membrane proton channel, linked together by a central stalk and a peripheral stalk. During catalysis, ATP synthesis in the catalytic domain of F(1) is coupled via a rotary mechanism of the central stalk subunits to proton translocation. Its function is as follows. This protein is part of the stalk that links CF(0) to CF(1). It either transmits conformational changes from CF(0) to CF(1) or is implicated in proton conduction. The protein is ATP synthase subunit delta of Prochlorococcus marinus (strain MIT 9303).